The primary structure comprises 511 residues: V-type proton ATPase subunit B, brain isoform (511 aa).

Residue Arg-400 coordinates ATP.

It belongs to the ATPase alpha/beta chains family. V-ATPase is a heteromultimeric enzyme made up of two complexes: the ATP-hydrolytic V1 complex and the proton translocation V0 complex. The V1 complex consists of three catalytic AB heterodimers that form a heterohexamer, three peripheral stalks each consisting of EG heterodimers, one central rotor including subunits D and F, and the regulatory subunits C and H. The proton translocation complex V0 consists of the proton transport subunit a, a ring of proteolipid subunits c9c'', rotary subunit d, subunits e and f, and the accessory subunits ATP6AP1/Ac45 and ATP6AP2/PRR. In terms of tissue distribution, kidney; localizes to early distal nephron, encompassing thick ascending limbs and distal convoluted tubules (at protein level).

It localises to the apical cell membrane. The protein resides in the melanosome. Its subcellular location is the cytoplasm. It is found in the cytoplasmic vesicle. The protein localises to the secretory vesicle. It localises to the synaptic vesicle membrane. The protein resides in the clathrin-coated vesicle membrane. Its function is as follows. Non-catalytic subunit of the V1 complex of vacuolar(H+)-ATPase (V-ATPase), a multisubunit enzyme composed of a peripheral complex (V1) that hydrolyzes ATP and a membrane integral complex (V0) that translocates protons. V-ATPase is responsible for acidifying and maintaining the pH of intracellular compartments and in some cell types, is targeted to the plasma membrane, where it is responsible for acidifying the extracellular environment. In renal intercalated cells, can partially compensate the lack of ATP6V1B1 and mediate secretion of protons (H+) into the urine under base-line conditions but not in conditions of acid load. This is V-type proton ATPase subunit B, brain isoform (ATP6V1B2) from Homo sapiens (Human).